The following is a 191-amino-acid chain: Protein Ves (191 aa).

The protein belongs to the Ves family.

This chain is Protein Ves, found in Shigella flexneri serotype 5b (strain 8401).